Here is a 301-residue protein sequence, read N- to C-terminus: Phosducin-like protein (301 aa).

T2 carries the N-acetylthreonine modification. Residues 15 to 60 (YYYSTSEDEDSDHEDKDRGRGAPASSSTPAEAELAGEGISVNTGPK) are disordered. A phosphoserine mark is found at S20 and S25. Residues 36–49 (APASSSTPAEAELA) show a composition bias toward low complexity. Residues 36–299 (APASSSTPAE…TCHSEDSDLE (264 aa)) enclose the Phosducin domain. A thioredoxin fold region spans residues 158–301 (FKQVLEIPSG…HSEDSDLEID (144 aa)). Phosphoserine occurs at positions 226, 293, and 296.

It belongs to the phosducin family. As to quaternary structure, interacts with the CCT chaperonin complex. Forms a complex with the beta and gamma subunits of the GTP-binding protein, transducin.

It is found in the cell projection. The protein resides in the cilium. Its function is as follows. Functions as a co-chaperone for CCT in the assembly of heterotrimeric G protein complexes, facilitates the assembly of both Gbeta-Ggamma and RGS-Gbeta5 heterodimers. Also acts as a positive regulator of hedgehog signaling and regulates ciliary function. This Rattus norvegicus (Rat) protein is Phosducin-like protein (Pdcl).